The primary structure comprises 177 residues: Probetacellulin (177 aa).

The signal sequence occupies residues 1 to 31; the sequence is MDPTAPGSSVSSLPLLLVLALGLAILHCVVA. The Extracellular portion of the chain corresponds to 32–118; the sequence is DGNTTRTPET…LFYLQQDRGQ (87 aa). Asparagine 34, asparagine 42, and asparagine 52 each carry an N-linked (GlcNAc...) asparagine glycan. An EGF-like domain is found at 65–105; that stretch reads HFSRCPKQYKHYCIHGRCRFVVDEQTPSCICEKGYFGARCE. Cystine bridges form between cysteine 69/cysteine 82, cysteine 77/cysteine 93, and cysteine 95/cysteine 104. Residues 112 to 177 constitute a propeptide, removed in mature form; sequence LQQDRGQILV…SEDIQETNIA (66 aa). Residues 119 to 139 form a helical membrane-spanning segment; it reads ILVVCLIVVMVVFIILVIGVC. The Cytoplasmic segment spans residues 140–177; the sequence is TCCHPLRKHRKKKKEEKMETLDKDKTPISEDIQETNIA. The interval 153–177 is disordered; sequence KEEKMETLDKDKTPISEDIQETNIA. Positions 154–167 are enriched in basic and acidic residues; sequence EEKMETLDKDKTPI.

Monomer. Interacts with EGFR and ERBB4. As to expression, found in several mouse tissues including kidney, uterus and liver, as well as in beta tumor cell line and MCF-7 cells. It is not detected in the brain.

The protein resides in the secreted. Its subcellular location is the extracellular space. The protein localises to the cell membrane. Functionally, growth factor that binds to EGFR, ERBB4 and other EGF receptor family members. Potent mitogen for retinal pigment epithelial cells and vascular smooth muscle cells. This Mus musculus (Mouse) protein is Probetacellulin (Btc).